We begin with the raw amino-acid sequence, 495 residues long: Cobyric acid synthase (495 aa).

The 194-residue stretch at 253 to 446 folds into the GATase cobBQ-type domain; it reads KISIAIVYFP…FHGIFDGSAF (194 aa). The Nucleophile role is filled by Cys334. His438 is an active-site residue.

Belongs to the CobB/CobQ family. CobQ subfamily.

It functions in the pathway cofactor biosynthesis; adenosylcobalamin biosynthesis. In terms of biological role, catalyzes amidations at positions B, D, E, and G on adenosylcobyrinic A,C-diamide. NH(2) groups are provided by glutamine, and one molecule of ATP is hydrogenolyzed for each amidation. In Chlorobium phaeobacteroides (strain BS1), this protein is Cobyric acid synthase.